The sequence spans 340 residues: Cobalt-precorrin-5B C(1)-methyltransferase (340 aa).

Belongs to the CbiD family.

It carries out the reaction Co-precorrin-5B + S-adenosyl-L-methionine = Co-precorrin-6A + S-adenosyl-L-homocysteine. It participates in cofactor biosynthesis; adenosylcobalamin biosynthesis; cob(II)yrinate a,c-diamide from sirohydrochlorin (anaerobic route): step 6/10. Functionally, catalyzes the methylation of C-1 in cobalt-precorrin-5B to form cobalt-precorrin-6A. This is Cobalt-precorrin-5B C(1)-methyltransferase from Pyrobaculum aerophilum (strain ATCC 51768 / DSM 7523 / JCM 9630 / CIP 104966 / NBRC 100827 / IM2).